The chain runs to 166 residues: PTS system glucose-specific EIIA component (166 aa).

In terms of domain architecture, PTS EIIA type-1 spans 34 to 138; sequence DPVFAQKMMG…SVISPIIITN (105 aa). The Zn(2+) site is built by His-71 and His-86. Residue His-86 is the Tele-phosphohistidine intermediate; for EIIA activity of the active site. His-86 bears the Phosphohistidine; by HPr mark.

In terms of assembly, heterodimer with glycerol kinase (glpk). The cofactor is Zn(2+).

It is found in the cytoplasm. Functionally, the phosphoenolpyruvate-dependent sugar phosphotransferase system (sugar PTS), a major carbohydrate active transport system, catalyzes the phosphorylation of incoming sugar substrates concomitantly with their translocation across the cell membrane. The enzyme II complex composed of PtsG and Crr is involved in glucose transport. This chain is PTS system glucose-specific EIIA component (crr), found in Staphylococcus aureus (strain Mu50 / ATCC 700699).